A 170-amino-acid chain; its full sequence is Odorant-binding protein 2a (170 aa).

The signal sequence occupies residues 1–15; it reads MKTLFLGVTLGLAAA. Cys-74 and Cys-166 are oxidised to a cystine.

It belongs to the calycin superfamily. Lipocalin family. Monomer. As to expression, strongly expressed in the nasal structures, salivary and lachrymal glands, and lung. Expressed in the liver.

Its subcellular location is the secreted. Its function is as follows. Binds and transports small hydrophobic volatile molecules with a higher affinity for aldehydes and large fatty acids, including undecanal, palmitic acid, efficient aldehydes, benzenic aldehydes, heterocyclic aldehydes and aliphatic acids. This is Odorant-binding protein 2a (OBP2A) from Homo sapiens (Human).